An 800-amino-acid polypeptide reads, in one-letter code: Phenylalanine--tRNA ligase beta subunit (800 aa).

Residues 38–147 form the tRNA-binding domain; that stretch reads GAELKGVVAA…PGTVPGTPIG (110 aa). A B5 domain is found at 401–477; that stretch reads VASPEVRMRW…RTLGYDAIPE (77 aa). Mg(2+) contacts are provided by aspartate 455, aspartate 461, glutamate 464, and glutamate 465. Residues 708 to 799 form the FDX-ACB domain; the sequence is PRLPAVLRDV…LRERVGAELR (92 aa).

This sequence belongs to the phenylalanyl-tRNA synthetase beta subunit family. Type 1 subfamily. Tetramer of two alpha and two beta subunits. It depends on Mg(2+) as a cofactor.

The protein localises to the cytoplasm. It catalyses the reaction tRNA(Phe) + L-phenylalanine + ATP = L-phenylalanyl-tRNA(Phe) + AMP + diphosphate + H(+). The sequence is that of Phenylalanine--tRNA ligase beta subunit from Anaeromyxobacter dehalogenans (strain 2CP-C).